The sequence spans 503 residues: Inosine-5'-monophosphate dehydrogenase (503 aa).

K(+)-binding residues include Gly20 and Ser22. CBS domains follow at residues 103–163 (FVVS…ETKV) and 167–228 (MTPF…LVDS). NAD(+) is bound at residue 261–263 (DSS). Residues Asp264, Phe266, Gly314, and Gly316 each contribute to the K(+) site. 312 to 314 (GIG) provides a ligand contact to NAD(+). Residue Ser317 coordinates IMP. Cys319 contributes to the K(+) binding site. The Thioimidate intermediate role is filled by Cys319. Residues 358-360 (DGG), 381-382 (GR), and 405-409 (YWGEG) contribute to the IMP site. Arg418 acts as the Proton acceptor in catalysis. Glu431 serves as a coordination point for IMP. K(+)-binding residues include Asn460, Glu485, Gly486, and Gly487.

The protein belongs to the IMPDH/GMPR family. As to quaternary structure, homotetramer. It depends on K(+) as a cofactor.

Its subcellular location is the cytoplasm. It catalyses the reaction IMP + NAD(+) + H2O = XMP + NADH + H(+). It functions in the pathway purine metabolism; XMP biosynthesis via de novo pathway; XMP from IMP: step 1/1. With respect to regulation, mycophenolic acid (MPA) is a non-competitive inhibitor that prevents formation of the closed enzyme conformation by binding to the same site as the amobile flap. In contrast, mizoribine monophosphate (MZP) is a competitive inhibitor that induces the closed conformation. MPA is a potent inhibitor of mammalian IMPDHs but a poor inhibitor of the bacterial enzymes. MZP is a more potent inhibitor of bacterial IMPDH. Catalyzes the conversion of inosine 5'-phosphate (IMP) to xanthosine 5'-phosphate (XMP), the first committed and rate-limiting step in the de novo synthesis of guanine nucleotides, and therefore plays an important role in the regulation of cell growth. Could also have a single-stranded nucleic acid-binding activity and could play a role in RNA and/or DNA metabolism. The polypeptide is Inosine-5'-monophosphate dehydrogenase (Tritrichomonas foetus (Trichomonas foetus)).